A 316-amino-acid chain; its full sequence is tRNA dimethylallyltransferase (316 aa).

17 to 24 (GPTASGKT) is a binding site for ATP. Residue 19–24 (TASGKT) coordinates substrate. Interaction with substrate tRNA regions lie at residues 42-45 (DSAL), 166-170 (QRLSR), 247-252 (RCVGYR), and 280-287 (KRQITWLR).

The protein belongs to the IPP transferase family. As to quaternary structure, monomer. Requires Mg(2+) as cofactor.

It carries out the reaction adenosine(37) in tRNA + dimethylallyl diphosphate = N(6)-dimethylallyladenosine(37) in tRNA + diphosphate. Functionally, catalyzes the transfer of a dimethylallyl group onto the adenine at position 37 in tRNAs that read codons beginning with uridine, leading to the formation of N6-(dimethylallyl)adenosine (i(6)A). This chain is tRNA dimethylallyltransferase, found in Cronobacter sakazakii (strain ATCC BAA-894) (Enterobacter sakazakii).